The chain runs to 140 residues: Ribonuclease P protein component (140 aa).

Residues 115 to 140 (RCKPGAPKPPPFKKRPNKSVKSNKQT) are disordered.

The protein belongs to the RnpA family. Consists of a catalytic RNA component (M1 or rnpB) and a protein subunit.

The catalysed reaction is Endonucleolytic cleavage of RNA, removing 5'-extranucleotides from tRNA precursor.. Functionally, RNaseP catalyzes the removal of the 5'-leader sequence from pre-tRNA to produce the mature 5'-terminus. It can also cleave other RNA substrates such as 4.5S RNA. The protein component plays an auxiliary but essential role in vivo by binding to the 5'-leader sequence and broadening the substrate specificity of the ribozyme. This chain is Ribonuclease P protein component, found in Pseudoalteromonas translucida (strain TAC 125).